The primary structure comprises 186 residues: MTVADTKKSVEQKMQKSIEAFKADLAKVRTGRAHTGLLDHVQVDYYGSMVPISQVAAVSLADARTISVQPWEKKMVQAVEKAIRDGDLGLNPATMGDVIRVPMPPLTEERRRELTKVVKGEAEGAKVAVRNLRRDANEQFKKLVKDKAISEDDERRGQDEVQKLTDKFVAEIDKLVAEKEKEIMTV.

The protein belongs to the RRF family.

It is found in the cytoplasm. Its function is as follows. Responsible for the release of ribosomes from messenger RNA at the termination of protein biosynthesis. May increase the efficiency of translation by recycling ribosomes from one round of translation to another. The sequence is that of Ribosome-recycling factor from Cupriavidus metallidurans (strain ATCC 43123 / DSM 2839 / NBRC 102507 / CH34) (Ralstonia metallidurans).